The sequence spans 155 residues: MEIKVIENIEQFYRFFTDKAKVGYAMENNGEYQLKNNQLYVGVYEGLMLVGFFSIEFIRNKLIEVHPVFEPGFRGQYALAATKRFSNWLINNIHFSTVITYVPEKTPWGKVICQLMKMRKVGVIDNALTAGHHQINMTLYQVTKEELVNGWKQRR.

This is Putative protein p31 (31) from Acyrthosiphon pisum secondary endosymbiont phage 1 (Bacteriophage APSE-1).